Consider the following 152-residue polypeptide: Maintenance of carboxysome distribution protein B (152 aa).

Self-associates, interacts with McdA probably via the C-terminus of both proteins. Homohexamerizes. Probably a trimer of dimers. Interacts with most of the shell components of the carboxysome (CcmK2, CcmK3, CcmK4, CcmL and CcmO, but not CcmP) via its C-terminus.

It localises to the carboxysome. Functionally, mcdA and McdB together mediate carboxysome (Cb) spacing, size, ultrastructure and probably inheritance in the cell. Together they prevent Cb aggregation. McdA is an ATPase that forms dynamic gradients on the nucleoid in response to adapter protein McdB, which associates with carboxysomes. The interplay between McdA gradients on the nucleoid and McdB-bound carboxysomes result in the equal spacing of Cbs along the cell length. McdB may have an additional function in cell divison. Stimulates the ATPase activity of McdA, causing McdA to be released from DNA. Overexpression leads to loss of McdA oscillation and formation of large Cb aggregates which colocalize with McdB, as well as diffuse McdB staining in the cytoplasm. Undergoes liquid-liquid phase separation between pH 6.5-7.5 and at concentrations between 1 uM and 167 uM. Forms polar foci upon overexpression in E.coli. In terms of biological role, incorrect positioning (aggregation) of carboxysomes results in reduced CO(2) fixation by encapsulated RuBisCO, which leads to slower growth, cell elongation, asymmetric cell division and an increase in RuBisCO levels. This chain is Maintenance of carboxysome distribution protein B, found in Synechococcus elongatus (strain ATCC 33912 / PCC 7942 / FACHB-805) (Anacystis nidulans R2).